Consider the following 454-residue polypeptide: Asparagine--tRNA ligase (454 aa).

Belongs to the class-II aminoacyl-tRNA synthetase family. As to quaternary structure, homodimer.

The protein resides in the cytoplasm. It carries out the reaction tRNA(Asn) + L-asparagine + ATP = L-asparaginyl-tRNA(Asn) + AMP + diphosphate + H(+). The sequence is that of Asparagine--tRNA ligase from Ureaplasma urealyticum serovar 10 (strain ATCC 33699 / Western).